Consider the following 229-residue polypeptide: PKHD-type hydroxylase BBta_3541 (229 aa).

The region spanning 78-180 (QIFPPLFNRY…RVASFFWMQS (103 aa)) is the Fe2OG dioxygenase domain. Fe cation-binding residues include H98, D100, and H161. Residue R171 coordinates 2-oxoglutarate.

Fe(2+) serves as cofactor. L-ascorbate is required as a cofactor.

The protein is PKHD-type hydroxylase BBta_3541 of Bradyrhizobium sp. (strain BTAi1 / ATCC BAA-1182).